The primary structure comprises 361 residues: Molybdopterin synthase catalytic subunit (361 aa).

Substrate-binding positions include His101–Arg102, Lys117, and Lys124–Glu126.

This sequence belongs to the MoaE family. MOCS2B subfamily. Heterotetramer; composed of 2 small (Mocs2A) and 2 large (Mocs2B) subunits.

It localises to the cytoplasm. It catalyses the reaction 2 [molybdopterin-synthase sulfur-carrier protein]-C-terminal-Gly-aminoethanethioate + cyclic pyranopterin phosphate + H2O = molybdopterin + 2 [molybdopterin-synthase sulfur-carrier protein]-C-terminal Gly-Gly + 2 H(+). It participates in cofactor biosynthesis; molybdopterin biosynthesis. In terms of biological role, catalytic subunit of the molybdopterin synthase complex, a complex that catalyzes the conversion of precursor Z into molybdopterin. Acts by mediating the incorporation of 2 sulfur atoms from thiocarboxylated Mocs2A into precursor Z to generate a dithiolene group. The sequence is that of Molybdopterin synthase catalytic subunit from Drosophila persimilis (Fruit fly).